The primary structure comprises 75 residues: Small ribosomal subunit protein bS16 (75 aa).

Belongs to the bacterial ribosomal protein bS16 family.

This Nitratiruptor sp. (strain SB155-2) protein is Small ribosomal subunit protein bS16.